The primary structure comprises 76 residues: Large ribosomal subunit protein eL29 (76 aa).

A compositionally biased stretch (basic residues) spans 1 to 29 (MAKSKNHTNHNQNKKAHRNGIKRPLRKRH). Disordered regions lie at residues 1-33 (MAKS…ESTL) and 47-76 (RKGN…PVTL). Ser-31 carries the post-translational modification Phosphoserine. The segment covering 51 to 62 (LSREESVKRYNE) has biased composition (basic and acidic residues).

The protein belongs to the eukaryotic ribosomal protein eL29 family.

The polypeptide is Large ribosomal subunit protein eL29 (RpL29) (Drosophila melanogaster (Fruit fly)).